The chain runs to 362 residues: MIKIAIDAMGGDFAPLEIVKGTLLALNKNTELQVFLYGNQKLITPLIEKTPFFGNKQIIIKHTPYFLGSADKNIRDQLKTTPNTSLFLALEAAKQDEVQGVVSAGATQTLILASHLILKKMPLMKRIAIAPMFNSFDNRTRILLDAGANTELKPQHLHTFANYATIIAKEILAIPNPQIKLLNIGTEPTKGRALELETYQLLSQDSNLNFGGNEEPQNLLTTSADILLSDGFTANIALKTYEGTMLNFMNHLKNILTKNFIKKIATKTLFQKPLQQLKNQIDPRQIGGAMLLGLNKIVIKAHGSSQSYAFCQAILQTQKLIKAQVNQKIANALEIAKNKENQTKKISTSTINPKTSETTKES.

The tract at residues 343 to 362 is disordered; it reads TKKISTSTINPKTSETTKES. Residues 344-356 show a composition bias toward polar residues; sequence KKISTSTINPKTS.

The protein belongs to the PlsX family. In terms of assembly, homodimer. Probably interacts with PlsY.

It is found in the cytoplasm. The enzyme catalyses a fatty acyl-[ACP] + phosphate = an acyl phosphate + holo-[ACP]. Its pathway is lipid metabolism; phospholipid metabolism. In terms of biological role, catalyzes the reversible formation of acyl-phosphate (acyl-PO(4)) from acyl-[acyl-carrier-protein] (acyl-ACP). This enzyme utilizes acyl-ACP as fatty acyl donor, but not acyl-CoA. The sequence is that of Phosphate acyltransferase from Aster yellows witches'-broom phytoplasma (strain AYWB).